The primary structure comprises 238 residues: MAMGLVGQKIGMTRLISDDGSITPVSVIKIELNRIVQTKTVDTNGYSAIQVTTGVKVNKKGEAKVHRVPAAIKGHYAKTSQEIGLGLWEFRVEADEITDATSVDISLFSAGHYVNVVGRSKGKGFQGGVKRHNFQMQDATHGNSISHRAIGSTGQCQEPGRVFKGKKMAGHMGNEQVTQECLKIVKVDSERNIIFVKGSIPGATKGFVKISLSSKKNKINQEVSKNIQNQATNEVVLN.

Gln-157 carries the post-translational modification N5-methylglutamine.

The protein belongs to the universal ribosomal protein uL3 family. In terms of assembly, part of the 50S ribosomal subunit. Forms a cluster with proteins L14 and L19. Post-translationally, methylated by PrmB.

In terms of biological role, one of the primary rRNA binding proteins, it binds directly near the 3'-end of the 23S rRNA, where it nucleates assembly of the 50S subunit. The sequence is that of Large ribosomal subunit protein uL3 from Ruthia magnifica subsp. Calyptogena magnifica.